A 360-amino-acid chain; its full sequence is MLVWLAEHLVKYYSGFNVFSYLTFRAIVSLLTALFISLWMGPRMIAHLQKLSFGQVVRNDGPESHFSKRGTPTMGGIMILTAIVISVLLWAYPSNPYVWCVLVVLVGYGIIGFVDDYRKVVRKDTKGLIARWKYFWMSVIALGVAFALYLAGKDTPATQLVVPFFKDVMPQLGLFYILLAYFVIVGTGNAVNLTDGLDGLAIMPTVFVAGGFALVAWATGNMNFASYLHIPYLRHAGELVIVCTAIVGAGLGFLWFNTYPAQVFMGDVGSLALGGALGIIAVLLRQEFLLVIMGGVFVVETLSVILQVGSFKLRGQRIFRMAPIHHHYELKGWPEPRVIVRFWIISLMLVLIGLATLKVR.

Topologically, residues 1-25 (MLVWLAEHLVKYYSGFNVFSYLTFR) are periplasmic. The helical transmembrane segment at 26–46 (AIVSLLTALFISLWMGPRMIA) threads the bilayer. Over 47 to 71 (HLQKLSFGQVVRNDGPESHFSKRGT) the chain is Cytoplasmic. The chain crosses the membrane as a helical span at residues 72 to 92 (PTMGGIMILTAIVISVLLWAY). Position 93 (Pro93) is a topological domain, periplasmic. The helical transmembrane segment at 94–114 (SNPYVWCVLVVLVGYGIIGFV) threads the bilayer. At 115–131 (DDYRKVVRKDTKGLIAR) the chain is on the cytoplasmic side. A helical transmembrane segment spans residues 132–152 (WKYFWMSVIALGVAFALYLAG). Residues 153–167 (KDTPATQLVVPFFKD) lie on the Periplasmic side of the membrane. Residues 168–188 (VMPQLGLFYILLAYFVIVGTG) form a helical membrane-spanning segment. Topologically, residues 189-198 (NAVNLTDGLD) are cytoplasmic. A helical membrane pass occupies residues 199–219 (GLAIMPTVFVAGGFALVAWAT). At 220 to 235 (GNMNFASYLHIPYLRH) the chain is on the periplasmic side. A helical membrane pass occupies residues 236 to 256 (AGELVIVCTAIVGAGLGFLWF). Residues 257–262 (NTYPAQ) are Cytoplasmic-facing. The chain crosses the membrane as a helical span at residues 263–283 (VFMGDVGSLALGGALGIIAVL). Topologically, residues 284 to 287 (LRQE) are periplasmic. Residues 288–308 (FLLVIMGGVFVVETLSVILQV) form a helical membrane-spanning segment. Topologically, residues 309-337 (GSFKLRGQRIFRMAPIHHHYELKGWPEPR) are cytoplasmic. The helical transmembrane segment at 338–358 (VIVRFWIISLMLVLIGLATLK) threads the bilayer. The Periplasmic segment spans residues 359–360 (VR).

It belongs to the glycosyltransferase 4 family. MraY subfamily. It depends on Mg(2+) as a cofactor.

It is found in the cell inner membrane. The enzyme catalyses UDP-N-acetyl-alpha-D-muramoyl-L-alanyl-gamma-D-glutamyl-meso-2,6-diaminopimeloyl-D-alanyl-D-alanine + di-trans,octa-cis-undecaprenyl phosphate = di-trans,octa-cis-undecaprenyl diphospho-N-acetyl-alpha-D-muramoyl-L-alanyl-D-glutamyl-meso-2,6-diaminopimeloyl-D-alanyl-D-alanine + UMP. It functions in the pathway cell wall biogenesis; peptidoglycan biosynthesis. Catalyzes the initial step of the lipid cycle reactions in the biosynthesis of the cell wall peptidoglycan: transfers peptidoglycan precursor phospho-MurNAc-pentapeptide from UDP-MurNAc-pentapeptide onto the lipid carrier undecaprenyl phosphate, yielding undecaprenyl-pyrophosphoryl-MurNAc-pentapeptide, known as lipid I. The sequence is that of Phospho-N-acetylmuramoyl-pentapeptide-transferase from Escherichia coli O7:K1 (strain IAI39 / ExPEC).